Consider the following 347-residue polypeptide: Mitochondrial carrier protein rim2 (347 aa).

Solcar repeat units lie at residues 32–136 (PPPL…GKRI), 146–234 (ENSQ…FKHA), and 256–345 (LDWG…IMHF). 6 helical membrane-spanning segments follow: residues 38 to 58 (FIAGGVAGMLGAIATAPLDVV), 105 to 125 (TRALFRGLGPNLIGTIPARSI), 152 to 172 (LMAAAIAGVITSAATNPIWLV), 214 to 233 (SLLGVGESTLQWVLYEKFKH), 262 to 282 (LGGAGIAKFMAAGIAYPHEVV), and 317 to 338 (LYGGLTAHLLRVVPNACILFGS).

Its subcellular location is the mitochondrion inner membrane. The catalysed reaction is 5-methyl-UTP(out) + UTP(in) = 5-methyl-UTP(in) + UTP(out). Mitochondrial transporter that imports/exports pyrimidine nucleotides into and from mitochondria. Selectively transports uridine, thymidine, and cytosine (deoxy)nucleoside di- and triphosphates by an antiport mechanism. Also transports, with lower efficiency, uridine, thymidine, and cytosine (deoxy)nucleoside monophosphates as well as guanosine (deoxy)nucleoside di- and triphosphate. May import (deoxy)nucleoside triphosphates in exchange for intramitochondrial (deoxy)nucleoside monophosphates, thus providing precursors necessary for de novo synthesis of mitochondrial DNA and RNA while exporting products of their catabolism. Mediates the transport of iron and other divalent metal ions like copper and zinc across the mitochondrial inner membrane in a pyrimidine nucleotide-dependent fashion. Catalyzes the co-import of pyrimidine nucleotides and divalent metal ions including ferrous iron. Participates in mitochondrial genome maintenance, regulation of mitochondrial membrane potential and mitochondrial respiration. This chain is Mitochondrial carrier protein rim2 (rim2), found in Schizosaccharomyces pombe (strain 972 / ATCC 24843) (Fission yeast).